We begin with the raw amino-acid sequence, 230 residues long: Orotidine 5'-phosphate decarboxylase (230 aa).

Residues D10, K31, 58–67 (DLKLHDIPNT), T117, R179, Q188, G208, and R209 contribute to the substrate site. The Proton donor role is filled by K60.

The protein belongs to the OMP decarboxylase family. Type 1 subfamily. As to quaternary structure, homodimer.

The catalysed reaction is orotidine 5'-phosphate + H(+) = UMP + CO2. Its pathway is pyrimidine metabolism; UMP biosynthesis via de novo pathway; UMP from orotate: step 2/2. Its function is as follows. Catalyzes the decarboxylation of orotidine 5'-monophosphate (OMP) to uridine 5'-monophosphate (UMP). The chain is Orotidine 5'-phosphate decarboxylase from Staphylococcus aureus (strain Mu3 / ATCC 700698).